The chain runs to 379 residues: Putative glutamate--cysteine ligase 2 (379 aa).

The protein belongs to the glutamate--cysteine ligase type 2 family. YbdK subfamily.

It catalyses the reaction L-cysteine + L-glutamate + ATP = gamma-L-glutamyl-L-cysteine + ADP + phosphate + H(+). Functionally, ATP-dependent carboxylate-amine ligase which exhibits weak glutamate--cysteine ligase activity. In Roseiflexus castenholzii (strain DSM 13941 / HLO8), this protein is Putative glutamate--cysteine ligase 2.